Consider the following 78-residue polypeptide: Small ribosomal subunit protein bS20 (78 aa).

Belongs to the bacterial ribosomal protein bS20 family.

Its function is as follows. Binds directly to 16S ribosomal RNA. In Streptococcus sanguinis (strain SK36), this protein is Small ribosomal subunit protein bS20.